A 509-amino-acid chain; its full sequence is UDP-N-acetylmuramyl-tripeptide synthetase (509 aa).

UDP-N-acetyl-alpha-D-muramoyl-L-alanyl-D-glutamate is bound at residue serine 30. Residue 111-117 (GTDGKTT) participates in ATP binding. Residues 155–156 (ST), threonine 182, and arginine 192 each bind UDP-N-acetyl-alpha-D-muramoyl-L-alanyl-D-glutamate. N6-carboxylysine is present on lysine 224.

It belongs to the MurCDEF family. MurE subfamily. Carboxylation is probably crucial for Mg(2+) binding and, consequently, for the gamma-phosphate positioning of ATP.

It localises to the cytoplasm. The protein operates within cell wall biogenesis; peptidoglycan biosynthesis. Catalyzes the addition of an amino acid to the nucleotide precursor UDP-N-acetylmuramoyl-L-alanyl-D-glutamate (UMAG) in the biosynthesis of bacterial cell-wall peptidoglycan. This chain is UDP-N-acetylmuramyl-tripeptide synthetase, found in Roseiflexus sp. (strain RS-1).